Reading from the N-terminus, the 75-residue chain is Large ribosomal subunit protein bL31 (75 aa).

Residues Cys-16, Cys-18, Cys-37, and Cys-40 each contribute to the Zn(2+) site.

Belongs to the bacterial ribosomal protein bL31 family. Type A subfamily. Part of the 50S ribosomal subunit. Requires Zn(2+) as cofactor.

In terms of biological role, binds the 23S rRNA. The polypeptide is Large ribosomal subunit protein bL31 (Nitrosospira multiformis (strain ATCC 25196 / NCIMB 11849 / C 71)).